Reading from the N-terminus, the 654-residue chain is Pyoverdine export ATP-binding/permease protein PvdT (654 aa).

One can recognise an ABC transporter domain in the interval 6–245 (IELCDIRKAY…QPEQLQANDL (240 aa)). 43-50 (GASGSGKS) lines the ATP pocket. Transmembrane regions (helical) follow at residues 282 to 302 (ALTL…LAVG), 529 to 549 (LSLM…IGVM), 596 to 616 (IVIA…VAFA), and 617 to 637 (LPAI…FGFM).

The protein belongs to the ABC transporter superfamily. Macrolide exporter (TC 3.A.1.122) family. In terms of assembly, part of the tripartite efflux system PvdRT-OpmQ, which is composed of an inner membrane component with both ATPase and permease domains, PvdT, a periplasmic membrane fusion protein, PvdR, and an outer membrane component, OpmQ.

It localises to the cell inner membrane. In terms of biological role, part of the tripartite efflux system PvdRT-OpmQ required for the secretion into the extracellular milieu of the siderophore pyoverdine (PVD), which is involved in iron acquisition. This subunit binds PVD and drives its secretion by hydrolyzing ATP. The system is responsible for export of newly synthesized PVD after the final steps of biosynthesis have taken place in the periplasm. It is also responsible for recycling of PVD after internalization of ferri-PVD into the periplasm by the outer-membrane receptor FpvA and release of iron from PVD, thus making PVD available for new cycles of iron uptake. In Pseudomonas entomophila (strain L48), this protein is Pyoverdine export ATP-binding/permease protein PvdT.